Here is a 188-residue protein sequence, read N- to C-terminus: dCTP deaminase (188 aa).

DCTP is bound by residues 111–116, 135–137, Gln156, Tyr170, and Gln180; these read KSTYAR and TLE. Glu137 serves as the catalytic Proton donor/acceptor.

Belongs to the dCTP deaminase family. Homotrimer.

It catalyses the reaction dCTP + H2O + H(+) = dUTP + NH4(+). The protein operates within pyrimidine metabolism; dUMP biosynthesis; dUMP from dCTP (dUTP route): step 1/2. Functionally, catalyzes the deamination of dCTP to dUTP. This Herminiimonas arsenicoxydans protein is dCTP deaminase.